A 249-amino-acid chain; its full sequence is ATP-dependent dethiobiotin synthetase BioD (249 aa).

Residue 11 to 16 (NVGKTI) coordinates ATP. Residue threonine 15 coordinates Mg(2+). Lysine 31 is a catalytic residue. Threonine 35 provides a ligand contact to substrate. ATP is bound by residues aspartate 40, 127 to 130 (EGAG), 188 to 189 (NS), and 215 to 217 (PYL). Residues aspartate 40 and glutamate 127 each coordinate Mg(2+).

Belongs to the dethiobiotin synthetase family. As to quaternary structure, homodimer. Requires Mg(2+) as cofactor.

The protein localises to the cytoplasm. It carries out the reaction (7R,8S)-7,8-diammoniononanoate + CO2 + ATP = (4R,5S)-dethiobiotin + ADP + phosphate + 3 H(+). It functions in the pathway cofactor biosynthesis; biotin biosynthesis; biotin from 7,8-diaminononanoate: step 1/2. Functionally, catalyzes a mechanistically unusual reaction, the ATP-dependent insertion of CO2 between the N7 and N8 nitrogen atoms of 7,8-diaminopelargonic acid (DAPA, also called 7,8-diammoniononanoate) to form a ureido ring. This chain is ATP-dependent dethiobiotin synthetase BioD, found in Neorickettsia sennetsu (strain ATCC VR-367 / Miyayama) (Ehrlichia sennetsu).